Reading from the N-terminus, the 275-residue chain is MPELPEVETVRRGLAALVEGKIVTNVVVRYSKMVSPKAEIFAEELEGKKILNVRRRGKYLLIDFSGDYTMVSHLRMEGKYSVVDRREEYGKHDHVIFELDDGKDLRYNDTRKFGRMNLVPTGEELQVGGLKTIGPEPTPETLTLEYLTHQLRNRKRGMKSFLLDQSMIAGLGNIYADEVLWLSKIHPQQISNTLTDEEIAILRESIFEELQLAIEAKGTTVFSYLNADGHAGSFQNQLHVYHRQGLPCQRCGTPIERIKVAQRGTHFCPHCQVLR.

Proline 2 acts as the Schiff-base intermediate with DNA in catalysis. Glutamate 3 functions as the Proton donor in the catalytic mechanism. The Proton donor; for beta-elimination activity role is filled by lysine 58. 3 residues coordinate DNA: histidine 92, arginine 111, and arginine 154. Residues 239-273 (HVYHRQGLPCQRCGTPIERIKVAQRGTHFCPHCQV) form an FPG-type zinc finger. The active-site Proton donor; for delta-elimination activity is arginine 263.

It belongs to the FPG family. Monomer. Zn(2+) is required as a cofactor.

It carries out the reaction Hydrolysis of DNA containing ring-opened 7-methylguanine residues, releasing 2,6-diamino-4-hydroxy-5-(N-methyl)formamidopyrimidine.. It catalyses the reaction 2'-deoxyribonucleotide-(2'-deoxyribose 5'-phosphate)-2'-deoxyribonucleotide-DNA = a 3'-end 2'-deoxyribonucleotide-(2,3-dehydro-2,3-deoxyribose 5'-phosphate)-DNA + a 5'-end 5'-phospho-2'-deoxyribonucleoside-DNA + H(+). Involved in base excision repair of DNA damaged by oxidation or by mutagenic agents. Acts as a DNA glycosylase that recognizes and removes damaged bases. Has a preference for oxidized purines, such as 7,8-dihydro-8-oxoguanine (8-oxoG). Has AP (apurinic/apyrimidinic) lyase activity and introduces nicks in the DNA strand. Cleaves the DNA backbone by beta-delta elimination to generate a single-strand break at the site of the removed base with both 3'- and 5'-phosphates. In Pediococcus pentosaceus (strain ATCC 25745 / CCUG 21536 / LMG 10740 / 183-1w), this protein is Formamidopyrimidine-DNA glycosylase.